Consider the following 1019-residue polypeptide: MRQRDLKFTFVVGEGKLAFDVVEFELEEALCEPFRLNLKLASDKNAIDFKQVLDQPGTFTLWQDGRPARYVHGIVSHFTQGSSGFRRTRYELLLEPQLARLELCCNWRIFQEKSVPEILQALLKEHRVLDYEQRIYHEHLPREYCVQAGDSDHYLHDRLAFEEGLVYYFRFDEHRHTLVCSDRLYVQERIAGGPVLFSAQPEGDNPQPVLHSFRYSENVRTARQTQRDYSFKRPTYDQEHHLAGEALEHQGSSYERYDYPGRYKRSGAGRPFTESRLRGHRRDARVASVSGDDPRLIPGHAFALEGHPRADFNAWWRPVRVVHRGTQYAGQEEESADAPLGVSYDLRAELVPEDVEWRPAPLPRPRIDGPQIATVVGPAGEEIHCDEWGRVKVQFPWDREGRHDEFSTCWIRVAQNWAGADWGHMAIPRIGQEVIVDYLDGDCDQPIVTGRTYRATNRPPYALPDHKILSTIKSKEYKGSRANELRIDDTTAQISAALMSDHGASALHLGYLTHPRPEGGKPRGEGFELRTDEHGAVRAAKGLLLSTEEQLRAGAGHLDRGVVVQVLEAALELARELGDYAGEHQGVGHDAAPQQTLQEAVRDLGHGANDESGKSNGGKPAIALSGPAGIAAATPASLTLAAGEHVDSVARQNQQVTAGQKVVINAGSDIGLFAQGGELRQITHQGPMLLQAQKNDIRLEAKQSVEVSASQQHVLVTAKEHITLMCGGAYLTLKGGNIELGMPGNFVVKAAKHSHVGAASLEAELPQFEVGETQRRFVLKQLDGQTAMPNVPYTITMANGEVIEGVTDAEGATQLLQKDAMNIAKVDMKHTKSPASAVAGIAAAVGAAVAVGKLLGGPDAEAGRALSEGEISLAKGVFGDSIDYSTVRLRDEDYVPWQGKDYVMAPNGHIYFGEELRGVADWSLESLQRQGLFIHEMTHVWQHQHGVNVLLVGAYQQARQFLLGDQYAYRLEPGKTLKDYNIEQQGDIVRDYFLEKNEFGEASANSRFAGVLKNFPTGY.

The disordered stretch occupies residues 268–291 (AGRPFTESRLRGHRRDARVASVSG). H935 contacts Zn(2+). E936 is a catalytic residue. Zn(2+)-binding residues include H939 and E983.

This sequence belongs to the VgrG protein family. In terms of assembly, interacts with Tla3; this interaction promotes Tle3 loading onto VgrG2b. Interacts with host gamma-tubulin ring complex components GCP1 and GCP4. Zn(2+) is required as a cofactor.

The protein resides in the secreted. In terms of biological role, part of the H2 type VI secretion system (H2-T6SS) specialized secretion system, which delivers several virulence factors in both prokaryotic and eukaryotic cells during infection. Forms the spike at the tip of the elongating tube probably formed by haemolysin co-regulated protein 2b/Hcp2b. Allows the delivery of the Tle3 antibacterial toxin to target cells where it exerts its toxicity. Additionally, acts directly as an effector and promotes internalization by interacting with the host gamma-tubulin ring complex. Elicits toxicity also in the bacterial periplasm and disrupts bacterial cell morphology. Toxicity is counteracted by a cognate immunity protein. This Pseudomonas aeruginosa (strain ATCC 15692 / DSM 22644 / CIP 104116 / JCM 14847 / LMG 12228 / 1C / PRS 101 / PAO1) protein is Type VI secretion system spike protein VgrG2b (vgrG2b).